Consider the following 166-residue polypeptide: Ribosome maturation factor RimM (166 aa).

One can recognise a PRC barrel domain in the interval 94 to 166; that stretch reads GDEYYWRDLM…EMVVRLLPGL (73 aa).

It belongs to the RimM family. Binds ribosomal protein uS19.

It localises to the cytoplasm. Its function is as follows. An accessory protein needed during the final step in the assembly of 30S ribosomal subunit, possibly for assembly of the head region. Essential for efficient processing of 16S rRNA. May be needed both before and after RbfA during the maturation of 16S rRNA. It has affinity for free ribosomal 30S subunits but not for 70S ribosomes. The sequence is that of Ribosome maturation factor RimM from Syntrophus aciditrophicus (strain SB).